The primary structure comprises 1373 residues: DNA-directed RNA polymerase subunit beta (1373 aa).

This sequence belongs to the RNA polymerase beta chain family. As to quaternary structure, the RNAP catalytic core consists of 2 alpha, 1 beta, 1 beta' and 1 omega subunit. When a sigma factor is associated with the core the holoenzyme is formed, which can initiate transcription.

The catalysed reaction is RNA(n) + a ribonucleoside 5'-triphosphate = RNA(n+1) + diphosphate. Functionally, DNA-dependent RNA polymerase catalyzes the transcription of DNA into RNA using the four ribonucleoside triphosphates as substrates. The polypeptide is DNA-directed RNA polymerase subunit beta (Rickettsia peacockii (strain Rustic)).